Consider the following 872-residue polypeptide: Protein SEY1 (872 aa).

The Cytoplasmic portion of the chain corresponds to 1–749 (MVANGHFAGV…KRSAIGGITQ (749 aa)). One can recognise a GB1/RHD3-type G domain in the interval 49–294 (GFNYHLISVF…IEGGIFLPEY (246 aa)). 59 to 66 (GSQSTGKS) lines the GTP pocket. Residues 482-504 (SNYQQELSLYQKDLENIGGQLRR) are a coiled coil. The interval 676–704 (LDKWIGHTPSSATPADEEDLTPIGGVDED) is disordered. Over residues 690–704 (ADEEDLTPIGGVDED) the composition is skewed to acidic residues. The chain crosses the membrane as a helical span at residues 750 to 770 (VPLYFYGLLLALGWNEIVAVL). Topologically, residues 771–773 (RNP) are lumenal. Residues 774–794 (AYFLLLFVCAVTAYVTYQLNL) traverse the membrane as a helical segment. Over 795–872 (WGPIIKMTEA…IDDADDDDDF (78 aa)) the chain is Cytoplasmic. A disordered region spans residues 849–872 (NRKSAGGFQNNRSHIDDADDDDDF).

The protein belongs to the TRAFAC class dynamin-like GTPase superfamily. GB1/RHD3 GTPase family. RHD3 subfamily.

The protein localises to the endoplasmic reticulum membrane. Its function is as follows. Cooperates with the reticulon proteins and tubule-shaping DP1 family proteins to generate and maintain the structure of the tubular endoplasmic reticulum network. Has GTPase activity, which is required for its function in ER organization. The polypeptide is Protein SEY1 (Paracoccidioides brasiliensis (strain Pb03)).